A 478-amino-acid chain; its full sequence is Proline--tRNA ligase (478 aa).

This sequence belongs to the class-II aminoacyl-tRNA synthetase family. ProS type 3 subfamily. Homodimer.

The protein localises to the cytoplasm. It carries out the reaction tRNA(Pro) + L-proline + ATP = L-prolyl-tRNA(Pro) + AMP + diphosphate. Its function is as follows. Catalyzes the attachment of proline to tRNA(Pro) in a two-step reaction: proline is first activated by ATP to form Pro-AMP and then transferred to the acceptor end of tRNA(Pro). This chain is Proline--tRNA ligase, found in Methanothrix thermoacetophila (strain DSM 6194 / JCM 14653 / NBRC 101360 / PT) (Methanosaeta thermophila).